The sequence spans 514 residues: Cholesterol side-chain cleavage enzyme, mitochondrial (514 aa).

A mitochondrion-targeting transit peptide spans 1–39; that stretch reads MMVSWSVCRSSLALPACGLPSARHNSSMPVVRQALSPDN. Cys458 contributes to the heme binding site.

This sequence belongs to the cytochrome P450 family. The cofactor is heme. In the ovary, not found in early vitellogenic follicles, barely detected in postvitellogenic follicles and abundant in post-ovulatory follicles.

Its subcellular location is the mitochondrion inner membrane. It carries out the reaction 6 reduced [adrenodoxin] + cholesterol + 3 O2 + 6 H(+) = 4-methylpentanal + pregnenolone + 6 oxidized [adrenodoxin] + 4 H2O. It participates in lipid metabolism; C21-steroid hormone metabolism. Catalyzes the side-chain cleavage reaction of cholesterol to pregnenolone, the precursor of most steroid hormones. This is Cholesterol side-chain cleavage enzyme, mitochondrial (cyp11a1) from Oncorhynchus mykiss (Rainbow trout).